The primary structure comprises 865 residues: Cadherin-related family member 1 (865 aa).

Positions 1–23 (MKHVRHFIPSLFLSLVHVCLVQA) are cleaved as a signal peptide. At 24 to 705 (NYAPYFFDNG…TKDNPMKALG (682 aa)) the chain is on the extracellular side. 6 consecutive Cadherin domains span residues 38–137 (NGNM…SPEF), 138–249 (INTP…PPMF), 250–356 (IGTP…PPTF), 362–475 (PQNR…VPKF), 476–579 (SSDY…SPEF), and 571–690 (DVND…GPMA). Residues 706–726 (VLAGVMGIMVLITIMISTAMF) traverse the membrane as a helical segment. The Cytoplasmic segment spans residues 727–865 (WRNKRSNKIM…RNASMGEPHI (139 aa)). The interval 782–810 (ENSNNNVQAAPVPPAAPLPPPPPALAASG) is disordered. A compositionally biased stretch (pro residues) spans 792–805 (PVPPAAPLPPPPPA).

It is found in the membrane. Potential calcium-dependent cell-adhesion protein. The sequence is that of Cadherin-related family member 1 (CDHR1) from Gallus gallus (Chicken).